The chain runs to 598 residues: Aspartate--tRNA ligase (598 aa).

L-aspartate is bound at residue E173. The segment at 197–200 is aspartate; the sequence is QLFK. Position 219 (R219) interacts with L-aspartate. Residues 219-221 and Q228 each bind ATP; that span reads RDE. H449 contributes to the L-aspartate binding site. Residue E483 participates in ATP binding. Residue R490 participates in L-aspartate binding. ATP is bound at residue 535–538; that stretch reads GLDR.

The protein belongs to the class-II aminoacyl-tRNA synthetase family. Type 1 subfamily. In terms of assembly, homodimer.

Its subcellular location is the cytoplasm. It carries out the reaction tRNA(Asp) + L-aspartate + ATP = L-aspartyl-tRNA(Asp) + AMP + diphosphate. Its function is as follows. Catalyzes the attachment of L-aspartate to tRNA(Asp) in a two-step reaction: L-aspartate is first activated by ATP to form Asp-AMP and then transferred to the acceptor end of tRNA(Asp). This Shewanella halifaxensis (strain HAW-EB4) protein is Aspartate--tRNA ligase.